The sequence spans 297 residues: Ribosomal RNA small subunit methyltransferase A (297 aa).

Residues Asn31, Leu33, Gly58, Glu79, Asp104, and Asn129 each contribute to the S-adenosyl-L-methionine site.

The protein belongs to the class I-like SAM-binding methyltransferase superfamily. rRNA adenine N(6)-methyltransferase family. RsmA subfamily.

The protein localises to the cytoplasm. It carries out the reaction adenosine(1518)/adenosine(1519) in 16S rRNA + 4 S-adenosyl-L-methionine = N(6)-dimethyladenosine(1518)/N(6)-dimethyladenosine(1519) in 16S rRNA + 4 S-adenosyl-L-homocysteine + 4 H(+). Functionally, specifically dimethylates two adjacent adenosines (A1518 and A1519) in the loop of a conserved hairpin near the 3'-end of 16S rRNA in the 30S particle. May play a critical role in biogenesis of 30S subunits. This is Ribosomal RNA small subunit methyltransferase A from Staphylococcus aureus (strain MRSA252).